Consider the following 3469-residue polypeptide: Abnormal spindle-like microcephaly-associated protein homolog (3469 aa).

Ser279, Ser282, Ser366, Ser391, and Ser419 each carry phosphoserine. A disordered region spans residues 469-488 (VKDISSHSHNKQPKRRPILS). Residues 476 to 485 (SHNKQPKRRP) are compositionally biased toward basic residues. Phosphoserine is present on Ser599. The 137-residue stretch at 911–1047 (KASKEILLAF…LLWKIVFAFQ (137 aa)) folds into the Calponin-homology (CH) 1 domain. A coiled-coil region spans residues 1048 to 1069 (VNISLNLDQLKEEIAFLKHTKS). A Phosphoserine modification is found at Ser1094. Residues 1101 to 1252 (GENIKLLMDW…YLSFLCARLL (152 aa)) enclose the Calponin-homology (CH) 2 domain. 38 consecutive IQ domains span residues 1338–1369 (QNKA…IVLQ), 1384–1413 (YLWA…KLKS), 1573–1604 (LKKI…VIIQ), 1623–1652 (TRSA…SVIK), 1646–1675 (ILTS…ATIK), 1669–1700 (LKNA…LFIQ), 1719–1748 (MRES…AVIS), 1742–1773 (QRKA…IIIQ), 1792–1821 (VKKA…AAVK), 1815–1844 (QSVA…SIIK), 1865–1894 (TKAA…AAMK), 1888–1919 (EHQA…LVIQ), 1938–1969 (LRHS…VIIQ), 1961–1992 (QHKC…LLIQ), 2011–2040 (TKAA…AAIT), 2034–2065 (CNKA…IIIQ), 2084–2115 (LKKT…TFIK), 2107–2138 (MHRA…IVIQ), 2157–2188 (FLKA…TVIQ), 2180–2209 (LQIA…ITKT), 2230–2261 (LRHS…TLIQ), 2253–2284 (MHIA…IWIQ), 2302–2333 (LQNA…TFIQ), 2325–2356 (MHRA…VVIQ), 2375–2406 (QRHS…ILIQ), 2398–2429 (MHSS…IFIQ), 2448–2479 (LRKA…VLIQ), 2521–2552 (QWHS…IIIQ), 2657–2686 (HTQA…AATR), 2680–2711 (MHLA…VVIQ), 2730–2759 (VQKS…EKMA), 2806–2837 (QSRA…RIQF), 2851–2882 (QKRA…VVLQ), 2901–2930 (IRSS…STIK), 2946–2977 (KVKA…KIIQ), 3021–3050 (RHQA…AALN), 3071–3102 (LKKS…RLLH), and 3173–3202 (QNRA…GIIK).

Its subcellular location is the cytoplasm. It is found in the cytoskeleton. It localises to the spindle. The protein resides in the nucleus. Probable role in mitotic spindle regulation and coordination of mitotic processes. May have a preferential role in regulating neurogenesis. This Saimiri boliviensis boliviensis (Bolivian squirrel monkey) protein is Abnormal spindle-like microcephaly-associated protein homolog (ASPM).